The chain runs to 118 residues: Holo-[acyl-carrier-protein] synthase (118 aa).

2 residues coordinate Mg(2+): Asp-8 and Glu-50.

The protein belongs to the P-Pant transferase superfamily. AcpS family. Mg(2+) is required as a cofactor.

The protein localises to the cytoplasm. It catalyses the reaction apo-[ACP] + CoA = holo-[ACP] + adenosine 3',5'-bisphosphate + H(+). Transfers the 4'-phosphopantetheine moiety from coenzyme A to a Ser of acyl-carrier-protein. The polypeptide is Holo-[acyl-carrier-protein] synthase (Leifsonia xyli subsp. xyli (strain CTCB07)).